We begin with the raw amino-acid sequence, 319 residues long: ATP-dependent 6-phosphofructokinase (319 aa).

Residues Gly10, Arg71 to Ser72, and Gly101 to Ser104 contribute to the ATP site. Asp102 contacts Mg(2+). Position 125–127 (Thr125–Asp127) interacts with substrate. Asp127 (proton acceptor) is an active-site residue. Arg154 serves as a coordination point for ADP. Substrate contacts are provided by residues Arg162 and Met169–Arg171. Residue Gly185–Glu187 coordinates ADP. Substrate is bound by residues Glu223, Arg244, and His250–Arg253.

It belongs to the phosphofructokinase type A (PFKA) family. ATP-dependent PFK group I subfamily. Prokaryotic clade 'B1' sub-subfamily. As to quaternary structure, homotetramer. Mg(2+) is required as a cofactor.

The protein localises to the cytoplasm. The enzyme catalyses beta-D-fructose 6-phosphate + ATP = beta-D-fructose 1,6-bisphosphate + ADP + H(+). It participates in carbohydrate degradation; glycolysis; D-glyceraldehyde 3-phosphate and glycerone phosphate from D-glucose: step 3/4. Allosterically activated by ADP and other diphosphonucleosides, and allosterically inhibited by phosphoenolpyruvate. Functionally, catalyzes the phosphorylation of D-fructose 6-phosphate to fructose 1,6-bisphosphate by ATP, the first committing step of glycolysis. This is ATP-dependent 6-phosphofructokinase from Wolinella succinogenes (strain ATCC 29543 / DSM 1740 / CCUG 13145 / JCM 31913 / LMG 7466 / NCTC 11488 / FDC 602W) (Vibrio succinogenes).